The sequence spans 255 residues: Enolase-phosphatase E1 (255 aa).

D22 and E24 together coordinate Mg(2+). Substrate-binding positions include 136-137 (SS) and K173. Mg(2+) is bound at residue D199.

The protein belongs to the HAD-like hydrolase superfamily. MasA/MtnC family. Monomer. Requires Mg(2+) as cofactor.

It is found in the cytoplasm. It localises to the nucleus. The catalysed reaction is 5-methylsulfanyl-2,3-dioxopentyl phosphate + H2O = 1,2-dihydroxy-5-(methylsulfanyl)pent-1-en-3-one + phosphate. The protein operates within amino-acid biosynthesis; L-methionine biosynthesis via salvage pathway; L-methionine from S-methyl-5-thio-alpha-D-ribose 1-phosphate: step 3/6. It participates in amino-acid biosynthesis; L-methionine biosynthesis via salvage pathway; L-methionine from S-methyl-5-thio-alpha-D-ribose 1-phosphate: step 4/6. Bifunctional enzyme that catalyzes the enolization of 2,3-diketo-5-methylthiopentyl-1-phosphate (DK-MTP-1-P) into the intermediate 2-hydroxy-3-keto-5-methylthiopentenyl-1-phosphate (HK-MTPenyl-1-P), which is then dephosphorylated to form the acireductone 1,2-dihydroxy-3-keto-5-methylthiopentene (DHK-MTPene). In Verticillium alfalfae (strain VaMs.102 / ATCC MYA-4576 / FGSC 10136) (Verticillium wilt of alfalfa), this protein is Enolase-phosphatase E1.